Consider the following 113-residue polypeptide: MHEMALCESMIEIIEREARDQHFARVRAVWVEIGALSHVEPEAMRFCFSAVAHGGIAADARFEIVSVSGAAWCMSCSKTVPLAQRSAPCPDCGGYQLQVTAGDELRVKELEVD.

H2 is a Ni(2+) binding site. 4 residues coordinate Zn(2+): C73, C76, C89, and C92.

This sequence belongs to the HypA/HybF family.

Functionally, involved in the maturation of [NiFe] hydrogenases. Required for nickel insertion into the metal center of the hydrogenase. The polypeptide is Hydrogenase maturation factor HypA (Rhodopseudomonas palustris (strain BisB5)).